Here is a 71-residue protein sequence, read N- to C-terminus: Prokaryotic ubiquitin-like protein Pup (71 aa).

The tract at residues 1–30 (MPSASGHHQIPAETQRHDDDQTQETAQGLS) is disordered. The stretch at 23 to 56 (QETAQGLSAAAMLAQEQADDLDAILDDIETVLET) forms a coiled coil. The ARC ATPase binding stretch occupies residues 27–65 (QGLSAAAMLAQEQADDLDAILDDIETVLETNAEEYVSSF). Glutamate 71 is covalently cross-linked (Isoglutamyl lysine isopeptide (Glu-Lys) (interchain with K-? in acceptor proteins)).

The protein belongs to the prokaryotic ubiquitin-like protein family. In terms of assembly, strongly interacts with the proteasome-associated ATPase ARC through a hydrophobic interface; the interacting region of Pup lies in its C-terminal half. There is one Pup binding site per ARC hexamer ring.

The protein operates within protein degradation; proteasomal Pup-dependent pathway. Protein modifier that is covalently attached to lysine residues of substrate proteins, thereby targeting them for proteasomal degradation. The tagging system is termed pupylation. The polypeptide is Prokaryotic ubiquitin-like protein Pup (Bifidobacterium animalis subsp. lactis (strain AD011)).